The chain runs to 424 residues: GTPase Obg (424 aa).

One can recognise an Obg domain in the interval 2-158; that stretch reads AKFIDQVKIM…YEANIVLKIL (157 aa). An OBG-type G domain is found at 159–326; sequence SDVGLVGLPS…LKKIIWEFLE (168 aa). GTP-binding positions include 165–172, 190–194, 211–214, 280–283, and 307–309; these read GLPSCGKS, FTTLV, DLPG, NKSD, and SAL. Mg(2+)-binding residues include serine 172 and threonine 192. The OCT domain occupies 344–422; sequence KEINYEPDFV…IYQHKFEWEE (79 aa).

Belongs to the TRAFAC class OBG-HflX-like GTPase superfamily. OBG GTPase family. In terms of assembly, monomer. Mg(2+) serves as cofactor.

It is found in the cytoplasm. An essential GTPase which binds GTP, GDP and possibly (p)ppGpp with moderate affinity, with high nucleotide exchange rates and a fairly low GTP hydrolysis rate. Plays a role in control of the cell cycle, stress response, ribosome biogenesis and in those bacteria that undergo differentiation, in morphogenesis control. In Mycoplasmopsis synoviae (strain 53) (Mycoplasma synoviae), this protein is GTPase Obg.